We begin with the raw amino-acid sequence, 439 residues long: Probable glycine dehydrogenase (decarboxylating) subunit 1 (439 aa).

The protein belongs to the GcvP family. N-terminal subunit subfamily. As to quaternary structure, the glycine cleavage system is composed of four proteins: P, T, L and H. In this organism, the P 'protein' is a heterodimer of two subunits.

The catalysed reaction is N(6)-[(R)-lipoyl]-L-lysyl-[glycine-cleavage complex H protein] + glycine + H(+) = N(6)-[(R)-S(8)-aminomethyldihydrolipoyl]-L-lysyl-[glycine-cleavage complex H protein] + CO2. The glycine cleavage system catalyzes the degradation of glycine. The P protein binds the alpha-amino group of glycine through its pyridoxal phosphate cofactor; CO(2) is released and the remaining methylamine moiety is then transferred to the lipoamide cofactor of the H protein. This chain is Probable glycine dehydrogenase (decarboxylating) subunit 1, found in Aquifex aeolicus (strain VF5).